The following is a 469-amino-acid chain: UDP-N-acetylmuramate--L-alanine ligase (469 aa).

An ATP-binding site is contributed by 112-118 (GTHGKTT).

Belongs to the MurCDEF family.

It localises to the cytoplasm. The enzyme catalyses UDP-N-acetyl-alpha-D-muramate + L-alanine + ATP = UDP-N-acetyl-alpha-D-muramoyl-L-alanine + ADP + phosphate + H(+). Its pathway is cell wall biogenesis; peptidoglycan biosynthesis. Cell wall formation. In Methylibium petroleiphilum (strain ATCC BAA-1232 / LMG 22953 / PM1), this protein is UDP-N-acetylmuramate--L-alanine ligase.